The chain runs to 220 residues: Tumor protein D54 (220 aa).

The residue at position 1 (Met-1) is an N-acetylmethionine. Phosphoserine is present on residues Ser-3, Ser-12, and Ser-19. Residues 40-82 (GLTEGEEEELRAELAKVEEEIVTLRQVLAAKERHCGELKRRLG) adopt a coiled-coil conformation. A phosphoserine mark is found at Ser-96, Ser-149, Ser-168, and Ser-175. Residue Thr-177 is modified to Phosphothreonine. Phosphoserine is present on Ser-180. A Phosphothreonine modification is found at Thr-187. A disordered region spans residues 189-220 (KSKVVGGRENGSDNLPPSPGSGDQTLPDHAPF). Residues Ser-206 and Ser-209 each carry the phosphoserine modification.

The protein belongs to the TPD52 family. As to quaternary structure, forms a homodimer or heterodimer with other members of the family. Interacts with MAL2.

The chain is Tumor protein D54 (Tpd52l2) from Mus musculus (Mouse).